A 636-amino-acid chain; its full sequence is Molybdenum cofactor biosynthesis protein 1 (636 aa).

The segment at 1 to 383 is molybdenum cofactor biosynthesis protein A; the sequence is MAARPAFGIV…QMKNRPMILI (383 aa). Residues 19 to 40 are disordered; that stretch reads RGCSSGAPVTQPRPGEPSRPTR. The residue at position 64 (S64) is a Phosphoserine. One can recognise a Radical SAM core domain in the interval 64–279; it reads SFGRQHSYLR…TIRQRWPGLE (216 aa). R73 is a binding site for GTP. Residues C80 and C84 each contribute to the [4Fe-4S] cluster site. Y86 serves as a coordination point for S-adenosyl-L-methionine. C87 contacts [4Fe-4S] cluster. R123 is a GTP binding site. Residue G127 coordinates S-adenosyl-L-methionine. T154 is a GTP binding site. Residue S178 coordinates S-adenosyl-L-methionine. K198 bears the N6-acetyllysine mark. K215 contacts GTP. M249 is a binding site for S-adenosyl-L-methionine. Positions 312 and 315 each coordinate [4Fe-4S] cluster. Residue 317 to 319 participates in GTP binding; that stretch reads RLR. A [4Fe-4S] cluster-binding site is contributed by C329. Residues 414–636 form a molybdenum cofactor biosynthesis protein C region; it reads QCLSDQMASL…GGQRGDFHRA (223 aa). The interval 444-484 is disordered; the sequence is SPQRHYSSYPDPDTHSKCLSTGSQAPDAPSGPGPTSNQLTH. The residue at position 528 (K528) is an N6-acetyllysine. The For molybdenum cofactor biosynthesis protein C activity role is filled by D606.

The protein in the C-terminal section; belongs to the MoaC family. In the N-terminal section; belongs to the radical SAM superfamily. MoaA family. In terms of assembly, isoform Mocs1a and isoform Mocs1b probably form a heterooligomer. The cofactor is [4Fe-4S] cluster.

The catalysed reaction is GTP + AH2 + S-adenosyl-L-methionine = (8S)-3',8-cyclo-7,8-dihydroguanosine 5'-triphosphate + 5'-deoxyadenosine + L-methionine + A + H(+). The enzyme catalyses (8S)-3',8-cyclo-7,8-dihydroguanosine 5'-triphosphate = cyclic pyranopterin phosphate + diphosphate. It functions in the pathway cofactor biosynthesis; molybdopterin biosynthesis. In terms of biological role, isoform Mocs1a and isoform Mocs1b probably form a complex that catalyzes the conversion of 5'-GTP to cyclic pyranopterin monophosphate (cPMP). Mocs1a catalyzes the cyclization of GTP to (8S)-3',8-cyclo-7,8-dihydroguanosine 5'-triphosphate and Mocs1b catalyzes the subsequent conversion of (8S)-3',8-cyclo-7,8-dihydroguanosine 5'-triphosphate to cPMP. In Mus musculus (Mouse), this protein is Molybdenum cofactor biosynthesis protein 1 (Mocs1).